A 196-amino-acid chain; its full sequence is dTTP/UTP pyrophosphatase (196 aa).

Residue Asp-72 is the Proton acceptor of the active site.

It belongs to the Maf family. YhdE subfamily. A divalent metal cation serves as cofactor.

The protein resides in the cytoplasm. It carries out the reaction dTTP + H2O = dTMP + diphosphate + H(+). The enzyme catalyses UTP + H2O = UMP + diphosphate + H(+). Its function is as follows. Nucleoside triphosphate pyrophosphatase that hydrolyzes dTTP and UTP. May have a dual role in cell division arrest and in preventing the incorporation of modified nucleotides into cellular nucleic acids. The polypeptide is dTTP/UTP pyrophosphatase (Chlamydia caviae (strain ATCC VR-813 / DSM 19441 / 03DC25 / GPIC) (Chlamydophila caviae)).